The sequence spans 492 residues: NADH-quinone oxidoreductase subunit N (492 aa).

The next 14 membrane-spanning stretches (helical) occupy residues 16–36 (LLIP…VGVF), 44–64 (LYIT…FLEG), 81–101 (ISLL…LFFM), 111–131 (GAEF…MASS), 134–154 (LILI…LIAL), 168–188 (FIMG…LYAA), 210–230 (ILVF…VTLV), 244–264 (NALL…AVII), 276–296 (AFVE…PNLI), 306–326 (MLAY…LINT), 332–352 (VIFF…GILW), 382–402 (LAIL…FCVF), 423–443 (IMAI…IYIF), and 463–483 (FALS…QNLL).

It belongs to the complex I subunit 2 family. As to quaternary structure, NDH-1 is composed of 14 different subunits. Subunits NuoA, H, J, K, L, M, N constitute the membrane sector of the complex.

It localises to the cell inner membrane. It catalyses the reaction a quinone + NADH + 5 H(+)(in) = a quinol + NAD(+) + 4 H(+)(out). Functionally, NDH-1 shuttles electrons from NADH, via FMN and iron-sulfur (Fe-S) centers, to quinones in the respiratory chain. The immediate electron acceptor for the enzyme in this species is believed to be ubiquinone. Couples the redox reaction to proton translocation (for every two electrons transferred, four hydrogen ions are translocated across the cytoplasmic membrane), and thus conserves the redox energy in a proton gradient. This chain is NADH-quinone oxidoreductase subunit N, found in Helicobacter hepaticus (strain ATCC 51449 / 3B1).